We begin with the raw amino-acid sequence, 417 residues long: Cyanophycinase (417 aa).

The signal sequence occupies residues 1–23 (MIRSFIRSSALLLALLPVTGYSA). Active-site charge relay system residues include serine 169, aspartate 188, and histidine 222.

It belongs to the peptidase S51 family.

The protein resides in the secreted. The enzyme catalyses [L-4-(L-arginin-2-N-yl)aspartate](n) + H2O = [L-4-(L-arginin-2-N-yl)aspartate](n-1) + L-4-(L-arginin-2-N-yl)aspartate. With respect to regulation, inhibited by serine protease inhibitors. Inhibited by N-Bromo-succinimide. In terms of biological role, exopeptidase that catalyzes the hydrolytic cleavage of multi-L-arginyl-poly-L-aspartic acid (cyanophycin; a water-insoluble reserve polymer) into aspartate-arginine dipeptides. This is Cyanophycinase (cphE) from Pseudomonas anguilliseptica.